We begin with the raw amino-acid sequence, 528 residues long: Acid-sensing ion channel 1 (528 aa).

Residues 1–49 (MELKAEEEEVGGVQPVSIQAFASSSTLHGLAHIFSYERLSLKRALWALC) are Cytoplasmic-facing. A helical transmembrane segment spans residues 50-66 (FLGSLAVLLCVCTERVQ). The Extracellular portion of the chain corresponds to 67–427 (YYFHYHHVTK…ETIEQKKAYE (361 aa)). Disulfide bonds link C93–C194, C172–C179, C290–C367, C310–C363, C314–C361, C323–C345, and C325–C337. N-linked (GlcNAc...) asparagine glycosylation is found at N368 and N395. A discontinuously helical membrane pass occupies residues 428 to 458 (IAGLLGDIGGQMGLFIGASILTVLELFDYAY). The short motif at 444-446 (GAS) is the GAS motif; ion selectivity filter element. Residues 459-528 (EVIKHKLCRR…ARGTFEDFTC (70 aa)) lie on the Cytoplasmic side of the membrane. Position 479 is a phosphoserine; by PKA (S479). Residue S499 is modified to Phosphoserine.

The protein belongs to the amiloride-sensitive sodium channel (TC 1.A.6) family. ASIC1 subfamily. Forms functional homotrimeric channels. Forms heterotrimers with other ASIC proteins, resulting in channels with distinct properties. Interacts with PICK1; regulates ASIC1 clustering in membranes. Interacts with STOM; alters heterotrimeric channels activity. Post-translationally, pH-gating could be regulated by serine proteases. Phosphorylation by PKA regulates interaction with PICK1 and subcellular localization. Phosphorylation by PKC may regulate the channel. In terms of tissue distribution, expressed in neurons throughout the central and peripheral nervous system.

It is found in the cell membrane. The protein resides in the postsynaptic cell membrane. The protein localises to the cell projection. It localises to the dendrite. The enzyme catalyses Na(+)(in) = Na(+)(out). It carries out the reaction K(+)(in) = K(+)(out). The catalysed reaction is Li(+)(in) = Li(+)(out). It catalyses the reaction Ca(2+)(in) = Ca(2+)(out). Potentiated by FMRFamide-related neuropeptides, which are induced during inflammation and modulate pain responses. Inhibited by the diuretic drug amiloride. Spider venom psalmotoxin-1 inhibits the channel by locking it in its desensitized conformation. The homotrimeric channel is inhibited by the spider venom pi-theraphotoxin-Hm3a. Homotrimeric and heterotrimeric (with ASIC2 isoform 1) channels are inhibited by the snake venom mambalgin-1, which prevents proton-induced transitions from the resting closed state to the active and/or desensitized states. Inhibited by Texas coral snake toxin MitTx1. Forms voltage-independent, pH-gated trimeric sodium channels that act as postsynaptic excitatory receptors in the nervous system, playing a crucial role in regulating synaptic plasticity, learning, and memory. Upon extracellular pH drop this channel elicits transient, fast activating, and completely desensitizing inward currents. Displays high selectivity for sodium ions but can also permit the permeation of other cations. Regulates more or less directly intracellular calcium concentration and CaMKII phosphorylation, and thereby the density of dendritic spines. Modulates neuronal activity in the circuits underlying innate fear. In terms of biological role, has high selectivity for sodium ions, but can also be permeable to other cations including calcium, lithium and potassium. Functionally, produces acid activated currents with a reduced amplitude and inactivates faster. Has high selectivity for sodium ions but also supports a calcium-mediated current which is sustained and maintained as long as acidic conditions are present. Also potentially permeable to lithium and potassium. Its function is as follows. Has no measurable proton-gated sodium channel activity in vitro. This is Acid-sensing ion channel 1 from Homo sapiens (Human).